The chain runs to 189 residues: Large ribosomal subunit protein bL9 (189 aa).

Belongs to the bacterial ribosomal protein bL9 family.

In terms of biological role, binds to the 23S rRNA. This chain is Large ribosomal subunit protein bL9, found in Beijerinckia indica subsp. indica (strain ATCC 9039 / DSM 1715 / NCIMB 8712).